The following is a 125-amino-acid chain: Holo-[acyl-carrier-protein] synthase (125 aa).

Mg(2+) contacts are provided by D8 and E57.

This sequence belongs to the P-Pant transferase superfamily. AcpS family. Requires Mg(2+) as cofactor.

The protein resides in the cytoplasm. The enzyme catalyses apo-[ACP] + CoA = holo-[ACP] + adenosine 3',5'-bisphosphate + H(+). Functionally, transfers the 4'-phosphopantetheine moiety from coenzyme A to a Ser of acyl-carrier-protein. The polypeptide is Holo-[acyl-carrier-protein] synthase (Halothermothrix orenii (strain H 168 / OCM 544 / DSM 9562)).